We begin with the raw amino-acid sequence, 130 residues long: Large-conductance mechanosensitive channel (130 aa).

The next 2 helical transmembrane spans lie at 11–31 (FALK…AAFG) and 70–90 (GAFI…FIFV).

Belongs to the MscL family. As to quaternary structure, homopentamer.

The protein resides in the cell membrane. Its function is as follows. Channel that opens in response to stretch forces in the membrane lipid bilayer. May participate in the regulation of osmotic pressure changes within the cell. This chain is Large-conductance mechanosensitive channel, found in Listeria welshimeri serovar 6b (strain ATCC 35897 / DSM 20650 / CCUG 15529 / CIP 8149 / NCTC 11857 / SLCC 5334 / V8).